Reading from the N-terminus, the 585-residue chain is Putative indole-3-acetic acid-amido synthetase GH3.9 (585 aa).

It belongs to the IAA-amido conjugating enzyme family.

Functionally, catalyzes the synthesis of indole-3-acetic acid (IAA)-amino acid conjugates, providing a mechanism for the plant to cope with the presence of excess auxin. The sequence is that of Putative indole-3-acetic acid-amido synthetase GH3.9 (GH3.9) from Arabidopsis thaliana (Mouse-ear cress).